The following is a 194-amino-acid chain: ATP-dependent Clp protease proteolytic subunit (194 aa).

Catalysis depends on Ser-98, which acts as the Nucleophile. His-123 is a catalytic residue.

Belongs to the peptidase S14 family. In terms of assembly, fourteen ClpP subunits assemble into 2 heptameric rings which stack back to back to give a disk-like structure with a central cavity, resembling the structure of eukaryotic proteasomes.

Its subcellular location is the cytoplasm. The enzyme catalyses Hydrolysis of proteins to small peptides in the presence of ATP and magnesium. alpha-casein is the usual test substrate. In the absence of ATP, only oligopeptides shorter than five residues are hydrolyzed (such as succinyl-Leu-Tyr-|-NHMec, and Leu-Tyr-Leu-|-Tyr-Trp, in which cleavage of the -Tyr-|-Leu- and -Tyr-|-Trp bonds also occurs).. Functionally, cleaves peptides in various proteins in a process that requires ATP hydrolysis. Has a chymotrypsin-like activity. Plays a major role in the degradation of misfolded proteins. This is ATP-dependent Clp protease proteolytic subunit from Staphylococcus saprophyticus subsp. saprophyticus (strain ATCC 15305 / DSM 20229 / NCIMB 8711 / NCTC 7292 / S-41).